The following is a 227-amino-acid chain: MKPMPKQREMRRLRDRISDIERQLSDCRRNNESNADMEREMQRLRDRIMDLDRQLNECKRNGNGTSSEEVNRLKTRIRNLKRSLEICSKDESELYSAYKTKLGRAREQISNLQESLRRERESDKTDSYYRRELTRERNKIVELEKELNKCFDAKYIDEINSKKTRISDLERQLAACKSNGGSNGNMDQYKREIESLKRELAECRRGNNGSHSDCKYYDEEARDCVKS.

A coiled-coil region spans residues 4 to 210 (MPKQREMRRL…AECRRGNNGS (207 aa)).

This is 27 kDa A-type inclusion protein from Bos taurus (Bovine).